We begin with the raw amino-acid sequence, 177 residues long: Large ribosomal subunit protein uL6 (177 aa).

The protein belongs to the universal ribosomal protein uL6 family. In terms of assembly, part of the 50S ribosomal subunit.

This protein binds to the 23S rRNA, and is important in its secondary structure. It is located near the subunit interface in the base of the L7/L12 stalk, and near the tRNA binding site of the peptidyltransferase center. In Brucella anthropi (strain ATCC 49188 / DSM 6882 / CCUG 24695 / JCM 21032 / LMG 3331 / NBRC 15819 / NCTC 12168 / Alc 37) (Ochrobactrum anthropi), this protein is Large ribosomal subunit protein uL6.